The primary structure comprises 109 residues: UPF0122 protein BH2485 (109 aa).

This sequence belongs to the UPF0122 family.

Its function is as follows. Might take part in the signal recognition particle (SRP) pathway. This is inferred from the conservation of its genetic proximity to ftsY/ffh. May be a regulatory protein. The sequence is that of UPF0122 protein BH2485 from Halalkalibacterium halodurans (strain ATCC BAA-125 / DSM 18197 / FERM 7344 / JCM 9153 / C-125) (Bacillus halodurans).